Reading from the N-terminus, the 396-residue chain is 8-amino-7-oxononanoate synthase (396 aa).

R31 serves as a coordination point for substrate. 118–119 (GY) serves as a coordination point for pyridoxal 5'-phosphate. H143 lines the substrate pocket. Residues S189, H217, and T245 each contribute to the pyridoxal 5'-phosphate site. Residue K248 is modified to N6-(pyridoxal phosphate)lysine. T362 is a substrate binding site.

Belongs to the class-II pyridoxal-phosphate-dependent aminotransferase family. BioF subfamily. As to quaternary structure, homodimer. It depends on pyridoxal 5'-phosphate as a cofactor.

The enzyme catalyses 6-carboxyhexanoyl-[ACP] + L-alanine + H(+) = (8S)-8-amino-7-oxononanoate + holo-[ACP] + CO2. It functions in the pathway cofactor biosynthesis; biotin biosynthesis. Catalyzes the decarboxylative condensation of pimeloyl-[acyl-carrier protein] and L-alanine to produce 8-amino-7-oxononanoate (AON), [acyl-carrier protein], and carbon dioxide. This chain is 8-amino-7-oxononanoate synthase, found in Methylobacillus flagellatus (strain ATCC 51484 / DSM 6875 / VKM B-1610 / KT).